The chain runs to 353 residues: uncharacterized protein (353 aa).

The first 30 residues, 1–30, serve as a signal peptide directing secretion; the sequence is MHLRHLFSLRLRGSLLLGSLLVASSFSTQA.

This is an uncharacterized protein from Escherichia coli O157:H7.